The primary structure comprises 532 residues: Membrane protein insertase YidC (532 aa).

A run of 5 helical transmembrane segments spans residues 7–27 (FFIF…QSQM), 336–356 (LTIL…ITFI), 413–433 (GGFL…YMLI), 450–470 (LSSQ…MFFI), and 492–512 (PVIF…YYII).

This sequence belongs to the OXA1/ALB3/YidC family. Type 1 subfamily. In terms of assembly, interacts with the Sec translocase complex via SecD. Specifically interacts with transmembrane segments of nascent integral membrane proteins during membrane integration.

It is found in the cell membrane. Functionally, required for the insertion and/or proper folding and/or complex formation of integral membrane proteins into the membrane. Involved in integration of membrane proteins that insert both dependently and independently of the Sec translocase complex, as well as at least some lipoproteins. Aids folding of multispanning membrane proteins. In Buchnera aphidicola subsp. Acyrthosiphon pisum (strain Tuc7), this protein is Membrane protein insertase YidC.